Consider the following 161-residue polypeptide: Peptidyl-prolyl cis-trans isomerase-like 1 (161 aa).

The 155-residue stretch at 1 to 155 (MATDVAFDTS…DEVKIIRARV (155 aa)) folds into the PPIase cyclophilin-type domain.

The protein belongs to the cyclophilin-type PPIase family. PPIL1 subfamily.

The catalysed reaction is [protein]-peptidylproline (omega=180) = [protein]-peptidylproline (omega=0). In terms of biological role, PPIases accelerate the folding of proteins. It catalyzes the cis-trans isomerization of proline imidic peptide bonds in oligopeptides. The protein is Peptidyl-prolyl cis-trans isomerase-like 1 (cyp1) of Aspergillus oryzae (strain ATCC 42149 / RIB 40) (Yellow koji mold).